The primary structure comprises 63 residues: Large ribosomal subunit protein uL29 (63 aa).

Belongs to the universal ribosomal protein uL29 family.

The chain is Large ribosomal subunit protein uL29 from Pseudomonas aeruginosa (strain UCBPP-PA14).